The sequence spans 154 residues: MAARLCCQLDPARDVLCLRPVSAESCGRPVSGSLGDLSSPSPSAVPADHGAHLSLRGLPVCAFSSAGPCALRFTSARRMETTVNAHQILPKVLHKRTLGLSAMSTTDLEAYFKDCLFKDWEELGEEIRLKVFVLGGCRHKLVCAPAPCNFFTSA.

Positions 68-117 (PCALRFTSARRMETTVNAHQILPKVLHKRTLGLSAMSTTDLEAYFKDCLF) are mitochondrial targeting sequence.

This sequence belongs to the orthohepadnavirus protein X family. As to quaternary structure, may form homodimer. May interact with host CEBPA, CFLAR, CREB1, DDB1, E4F1, HBXIP, HSPD1/HSP60, NFKBIA, POLR2E and SMAD4. Interacts with host SMC5-SMC6 complex and induces its degradation. Interacts with host TRPC4AP; leading to prevent ubiquitination of TRPC4AP. Interacts with host PLSCR1; this interaction promotes ubiquitination and degradation of HBx and impairs HBx-mediated cell proliferation. Post-translationally, a fraction may be phosphorylated in insect cells and HepG2 cells, a human hepatoblastoma cell line. Phosphorylated in vitro by host protein kinase C or mitogen-activated protein kinase. N-acetylated in insect cells.

It localises to the host cytoplasm. Its subcellular location is the host nucleus. The protein localises to the host mitochondrion. In terms of biological role, multifunctional protein that plays a role in silencing host antiviral defenses and promoting viral transcription. Does not seem to be essential for HBV infection. May be directly involved in development of cirrhosis and liver cancer (hepatocellular carcinoma). Most of cytosolic activities involve modulation of cytosolic calcium. The effect on apoptosis is controversial depending on the cell types in which the studies have been conducted. May induce apoptosis by localizing in mitochondria and causing loss of mitochondrial membrane potential. May also modulate apoptosis by binding host CFLAR, a key regulator of the death-inducing signaling complex (DISC). Promotes viral transcription by using the host E3 ubiquitin ligase DDB1 to target the SMC5-SMC6 complex to proteasomal degradation. This host complex would otherwise bind to viral episomal DNA, and prevents its transcription. Moderately stimulates transcription of many different viral and cellular transcription elements. Promoters and enhancers stimulated by HBx contain DNA binding sites for NF-kappa-B, AP-1, AP-2, c-EBP, ATF/CREB, or the calcium-activated factor NF-AT. The chain is Protein X from Hepatitis B virus genotype E subtype ayw4 (isolate Kou) (HBV-E).